A 155-amino-acid chain; its full sequence is Myosin light chain alkali (155 aa).

EF-hand domains follow at residues 7-41 and 80-115; these read REVE…LNLN and GCYE…LGES.

Myosin is a hexamer of 2 heavy chains and 4 light chains. As to expression, indirect flight muscle isoform is found only in the indirect flight muscles. The larval and adult isoform is present in the larval and adult musculature.

The chain is Myosin light chain alkali (Mlc1) from Drosophila melanogaster (Fruit fly).